The sequence spans 361 residues: Histidinol-phosphate aminotransferase (361 aa).

N6-(pyridoxal phosphate)lysine is present on K221.

It belongs to the class-II pyridoxal-phosphate-dependent aminotransferase family. Histidinol-phosphate aminotransferase subfamily. Homodimer. Requires pyridoxal 5'-phosphate as cofactor.

The enzyme catalyses L-histidinol phosphate + 2-oxoglutarate = 3-(imidazol-4-yl)-2-oxopropyl phosphate + L-glutamate. It functions in the pathway amino-acid biosynthesis; L-histidine biosynthesis; L-histidine from 5-phospho-alpha-D-ribose 1-diphosphate: step 7/9. This Symbiobacterium thermophilum (strain DSM 24528 / JCM 14929 / IAM 14863 / T) protein is Histidinol-phosphate aminotransferase.